A 670-amino-acid chain; its full sequence is Leucine-rich repeat-containing protein 45 (670 aa).

LRR repeat units lie at residues 58–80 (TLCT…LLLR), 87–107 (VLRF…EALG), 115–136 (SIQS…FATF), 145–166 (ALQR…ELAL), 173–194 (TLQQ…ALMN), and 201–212 (TLWRLDLAGNNI). Positions 252–645 (REEKSKQFLD…IARIRDEEAQ (394 aa)) form a coiled coil. Ser-661 bears the Phosphoserine; by NEK2 mark.

In terms of assembly, homomer. Interacts with CROCC/rootletin and CEP250. Interacts with CEP44. Interacts with CCDC102B (via N-terminus). Post-translationally, phosphorylated by NEK2 during misosis, phosphorylation reduces centrosomal localization which subsequently leads to centrosome separation.

The protein resides in the cytoplasm. The protein localises to the cytoskeleton. It is found in the microtubule organizing center. It localises to the centrosome. Its function is as follows. Component of the proteinaceous fiber-like linker between two centrioles, required for centrosome cohesion. This is Leucine-rich repeat-containing protein 45 (LRRC45) from Homo sapiens (Human).